We begin with the raw amino-acid sequence, 102 residues long: UPF0045 protein Mb1933 (102 aa).

Belongs to the UPF0045 family.

The chain is UPF0045 protein Mb1933 from Mycobacterium bovis (strain ATCC BAA-935 / AF2122/97).